A 307-amino-acid chain; its full sequence is Agmatinase (307 aa).

Residues His-128, Asp-151, His-153, Asp-155, Asp-232, and Asp-234 each contribute to the Mn(2+) site.

This sequence belongs to the arginase family. Agmatinase subfamily. The cofactor is Mn(2+).

The catalysed reaction is agmatine + H2O = urea + putrescine. It functions in the pathway amine and polyamine biosynthesis; putrescine biosynthesis via agmatine pathway; putrescine from agmatine: step 1/1. Its function is as follows. Catalyzes the formation of putrescine from agmatine. The sequence is that of Agmatinase from Neisseria gonorrhoeae (strain ATCC 700825 / FA 1090).